A 202-amino-acid chain; its full sequence is uncharacterized protein (202 aa).

The chain crosses the membrane as a helical span at residues 18–38 (FLIFLIFLSVLGCGITISGCI).

Its subcellular location is the membrane. This is an uncharacterized protein from Methanocaldococcus jannaschii (strain ATCC 43067 / DSM 2661 / JAL-1 / JCM 10045 / NBRC 100440) (Methanococcus jannaschii).